The chain runs to 55 residues: Mitochondrial import receptor subunit TOM7 homolog (55 aa).

Residues 1–20 (MVKLSKEAKQRLQQLFKGGQ) are Cytoplasmic-facing. Residues 21 to 40 (FAIRWGFIPLVIYLGFTRGA) form a helical membrane-spanning segment. At 41 to 55 (DPGMPEPSVLSLLWG) the chain is on the mitochondrial intermembrane side.

The protein belongs to the Tom7 family. In terms of assembly, forms part of the preprotein translocase complex of the outer mitochondrial membrane (TOM complex) which consists of at least 7 different proteins (TOMM5, TOMM6, TOMM7, TOMM20, TOMM22, TOMM40 and TOMM70).

It is found in the mitochondrion outer membrane. Functionally, required for assembly and stability of the TOM complex. Positive regulator of PRKN translocation to damaged mitochondria. Acts probably by stabilizing PINK1 on the outer membrane of depolarized mitochondria. In Mus musculus (Mouse), this protein is Mitochondrial import receptor subunit TOM7 homolog (Tomm7).